The sequence spans 88 residues: Small ribosomal subunit protein bS18A (88 aa).

The protein belongs to the bacterial ribosomal protein bS18 family. As to quaternary structure, part of the 30S ribosomal subunit. Forms a tight heterodimer with protein bS6.

Its function is as follows. Binds as a heterodimer with protein bS6 to the central domain of the 16S rRNA, where it helps stabilize the platform of the 30S subunit. The chain is Small ribosomal subunit protein bS18A from Roseiflexus sp. (strain RS-1).